Consider the following 134-residue polypeptide: Methylglyoxal synthase (134 aa).

Positions 1–134 constitute an MGS-like domain; that stretch reads MNIALIAHDN…DWRERVKERG (134 aa). Substrate-binding positions include H8, K12, 34 to 37, and 54 to 55; these read TGTT and SG. Residue D60 is the Proton donor/acceptor of the active site. A substrate-binding site is contributed by H87.

Belongs to the methylglyoxal synthase family.

It catalyses the reaction dihydroxyacetone phosphate = methylglyoxal + phosphate. Catalyzes the formation of methylglyoxal from dihydroxyacetone phosphate. The polypeptide is Methylglyoxal synthase (Alkaliphilus metalliredigens (strain QYMF)).